Here is a 1052-residue protein sequence, read N- to C-terminus: Swarming motility protein SwrC (1052 aa).

This sequence belongs to the resistance-nodulation-cell division (RND) (TC 2.A.6) family.

Required for self-resistance to surfactin, an antimicrobial lipopeptide surfactant produced by B.subtilis. Also required for swarming motility. The chain is Swarming motility protein SwrC (swrC) from Bacillus subtilis (strain 168).